A 128-amino-acid chain; its full sequence is uncharacterized protein (128 aa).

The next 4 helical transmembrane spans lie at 2–22 (LPFYFLSVATNAAIGFILTVL), 34–54 (FLYDATFSLVLALLSGIAAVC), 64–84 (LPVLGDLIPTLAGGTGCALFL), and 108–128 (LGLFSLAASILHLLFAPTLFL).

Its subcellular location is the cell membrane. This is an uncharacterized protein from Treponema pallidum (strain Nichols).